Here is a 485-residue protein sequence, read N- to C-terminus: N-succinylglutamate 5-semialdehyde dehydrogenase (485 aa).

220–225 (GSANTG) is a binding site for NAD(+). Catalysis depends on residues E243 and C278.

This sequence belongs to the aldehyde dehydrogenase family. AstD subfamily.

It catalyses the reaction N-succinyl-L-glutamate 5-semialdehyde + NAD(+) + H2O = N-succinyl-L-glutamate + NADH + 2 H(+). The protein operates within amino-acid degradation; L-arginine degradation via AST pathway; L-glutamate and succinate from L-arginine: step 4/5. Functionally, catalyzes the NAD-dependent reduction of succinylglutamate semialdehyde into succinylglutamate. The polypeptide is N-succinylglutamate 5-semialdehyde dehydrogenase (Vibrio parahaemolyticus serotype O3:K6 (strain RIMD 2210633)).